We begin with the raw amino-acid sequence, 427 residues long: Glutamate-1-semialdehyde 2,1-aminomutase (427 aa).

Position 265 is an N6-(pyridoxal phosphate)lysine (K265).

This sequence belongs to the class-III pyridoxal-phosphate-dependent aminotransferase family. HemL subfamily. Homodimer. The cofactor is pyridoxal 5'-phosphate.

The protein resides in the cytoplasm. The catalysed reaction is (S)-4-amino-5-oxopentanoate = 5-aminolevulinate. The protein operates within porphyrin-containing compound metabolism; protoporphyrin-IX biosynthesis; 5-aminolevulinate from L-glutamyl-tRNA(Glu): step 2/2. This Pseudomonas aeruginosa (strain UCBPP-PA14) protein is Glutamate-1-semialdehyde 2,1-aminomutase.